Here is a 284-residue protein sequence, read N- to C-terminus: HTH-type transcriptional activator RhaR (284 aa).

Positions 181–279 (DMLMNALRAS…GVSPSAYRQR (99 aa)) constitute an HTH araC/xylS-type domain. 2 consecutive DNA-binding regions (H-T-H motif) follow at residues 198–219 (EAFC…KEQT) and 246–269 (IGDI…HQAF).

In terms of assembly, binds DNA as a dimer.

Its subcellular location is the cytoplasm. Activates expression of the rhaSR operon in response to L-rhamnose. This is HTH-type transcriptional activator RhaR from Pectobacterium carotovorum subsp. carotovorum (strain PC1).